We begin with the raw amino-acid sequence, 491 residues long: Myocilin (491 aa).

The first 18 residues, 1-18 (MPAVQLLLLACPVWDVGA), serve as a signal peptide directing secretion. Asn-43 carries N-linked (GlcNAc...) asparagine glycosylation. The stretch at 98–171 (QETPEGLQRE…QEVARLRRGQ (74 aa)) forms a coiled coil. Positions 151–189 (ENLARRLESSSQEVARLRRGQCPQTRDTARDVPPGSREV) are disordered. One can recognise an Olfactomedin-like domain in the interval 231 to 490 (GCGELVWVGE…MVTYDIKLSK (260 aa)). Cys-232 and Cys-420 are disulfide-bonded. Positions 367, 415, 416, 464, and 465 each coordinate Ca(2+).

Homodimer (via N-terminus). Can also form higher oligomers. Interacts with OLFM3, FN1, NRCAM, GLDN and NFASC. Interacts (via N-terminus) with MYL2. Interacts with SFRP1, FRZB, FZD7, FZD10, FZD1 and WIF1; regulates Wnt signaling. Interacts with SNTA1; regulates muscle hypertrophy. Interacts with ERBB2 and ERBB3; activates ERBB2-ERBB3 signaling pathway. Interacts with SNCG; affects its secretion and its aggregation. Palmitoylated. Post-translationally, undergoes a calcium-dependent proteolytic cleavage at Arg-213 by CAPN2 in the endoplasmic reticulum. The result is the production of two fragments, one of 35 kDa containing the C-terminal olfactomedin-like domain, and another of 20 kDa containing the N-terminal leucine zipper-like domain. In terms of processing, glycosylated.

The protein localises to the secreted. It localises to the golgi apparatus. Its subcellular location is the cytoplasmic vesicle. It is found in the extracellular space. The protein resides in the extracellular matrix. The protein localises to the extracellular exosome. It localises to the mitochondrion. Its subcellular location is the mitochondrion intermembrane space. It is found in the mitochondrion inner membrane. The protein resides in the mitochondrion outer membrane. The protein localises to the rough endoplasmic reticulum. It localises to the cell projection. Its subcellular location is the cilium. It is found in the endoplasmic reticulum. Functionally, secreted glycoprotein regulating the activation of different signaling pathways in adjacent cells to control different processes including cell adhesion, cell-matrix adhesion, cytoskeleton organization and cell migration. Promotes substrate adhesion, spreading and formation of focal contacts. Negatively regulates cell-matrix adhesion and stress fiber assembly through Rho protein signal transduction. Modulates the organization of actin cytoskeleton by stimulating the formation of stress fibers through interactions with components of Wnt signaling pathways. Promotes cell migration through activation of PTK2 and the downstream phosphatidylinositol 3-kinase signaling. Plays a role in bone formation and promotes osteoblast differentiation in a dose-dependent manner through mitogen-activated protein kinase signaling. Mediates myelination in the peripheral nervous system through ERBB2/ERBB3 signaling. Plays a role as a regulator of muscle hypertrophy through the components of dystrophin-associated protein complex. Involved in positive regulation of mitochondrial depolarization. Plays a role in neurite outgrowth. May participate in the obstruction of fluid outflow in the trabecular meshwork. This chain is Myocilin (MYOC), found in Macaca fascicularis (Crab-eating macaque).